Here is a 175-residue protein sequence, read N- to C-terminus: Bifunctional protein PyrR (175 aa).

Substrate-binding positions include 40–41, 102–110, R135, and V159; these read TR and DDVLYTGRT. Positions 98–110 match the PRPP-binding motif; it reads VVIIDDVLYTGRT.

This sequence belongs to the purine/pyrimidine phosphoribosyltransferase family. PyrR subfamily. Homodimer and homohexamer; in equilibrium.

The catalysed reaction is UMP + diphosphate = 5-phospho-alpha-D-ribose 1-diphosphate + uracil. In terms of biological role, regulates transcriptional attenuation of the pyrimidine nucleotide (pyr) operon by binding in a uridine-dependent manner to specific sites on pyr mRNA. This disrupts an antiterminator hairpin in the RNA and favors formation of a downstream transcription terminator, leading to a reduced expression of downstream genes. Functionally, also displays a weak uracil phosphoribosyltransferase activity which is not physiologically significant. The protein is Bifunctional protein PyrR of Staphylococcus epidermidis (strain ATCC 12228 / FDA PCI 1200).